Here is a 599-residue protein sequence, read N- to C-terminus: Elongation factor 4 (599 aa).

The tr-type G domain occupies 5 to 187 (SHIRNFSIIA…RLVHTIPAPE (183 aa)). GTP-binding positions include 17–22 (DHGKST) and 134–137 (NKMD).

It belongs to the TRAFAC class translation factor GTPase superfamily. Classic translation factor GTPase family. LepA subfamily.

The protein resides in the cell inner membrane. It carries out the reaction GTP + H2O = GDP + phosphate + H(+). Functionally, required for accurate and efficient protein synthesis under certain stress conditions. May act as a fidelity factor of the translation reaction, by catalyzing a one-codon backward translocation of tRNAs on improperly translocated ribosomes. Back-translocation proceeds from a post-translocation (POST) complex to a pre-translocation (PRE) complex, thus giving elongation factor G a second chance to translocate the tRNAs correctly. Binds to ribosomes in a GTP-dependent manner. In Pseudomonas putida (strain ATCC 47054 / DSM 6125 / CFBP 8728 / NCIMB 11950 / KT2440), this protein is Elongation factor 4.